The primary structure comprises 166 residues: Lipoprotein signal peptidase (166 aa).

The next 4 helical transmembrane spans lie at 9–29 (ASGA…FDQL), 45–65 (ALTS…FGFL), 71–91 (WQRW…CFLL), and 100–120 (FSLS…DRLV). Residues Asp126 and Asp144 contribute to the active site. The helical transmembrane segment at 135 to 155 (WHFPAFNLADSAITIGAVLLI) threads the bilayer.

The protein belongs to the peptidase A8 family.

It localises to the cell inner membrane. The catalysed reaction is Release of signal peptides from bacterial membrane prolipoproteins. Hydrolyzes -Xaa-Yaa-Zaa-|-(S,diacylglyceryl)Cys-, in which Xaa is hydrophobic (preferably Leu), and Yaa (Ala or Ser) and Zaa (Gly or Ala) have small, neutral side chains.. It participates in protein modification; lipoprotein biosynthesis (signal peptide cleavage). Its function is as follows. This protein specifically catalyzes the removal of signal peptides from prolipoproteins. The chain is Lipoprotein signal peptidase from Burkholderia multivorans (strain ATCC 17616 / 249).